We begin with the raw amino-acid sequence, 111 residues long: NADH-ubiquinone oxidoreductase chain 4 (111 aa).

Residues 35 to 55 (LITSLFSWLDITVFLTGLSAF) traverse the membrane as a helical segment.

This sequence belongs to the complex I subunit 4 family.

The protein resides in the mitochondrion membrane. It carries out the reaction a ubiquinone + NADH + 5 H(+)(in) = a ubiquinol + NAD(+) + 4 H(+)(out). Its function is as follows. Core subunit of the mitochondrial membrane respiratory chain NADH dehydrogenase (Complex I) that is believed to belong to the minimal assembly required for catalysis. Complex I functions in the transfer of electrons from NADH to the respiratory chain. The immediate electron acceptor for the enzyme is believed to be ubiquinone. This is NADH-ubiquinone oxidoreductase chain 4 (MT-ND4) from Caiman crocodilus (Spectacled caiman).